Here is a 325-residue protein sequence, read N- to C-terminus: Large ribosomal subunit protein uL18 (325 aa).

A disordered region spans residues 247–300; that stretch reads IRIPPSRRNPRRRSPRSGGRWPSCRSPPARRRSRSTRPTSWPRSRPTSKPKRPR. Low complexity-rich tracts occupy residues 262 to 273 and 282 to 291; these read RSGGRWPSCRSP and TRPTSWPRSR.

It belongs to the universal ribosomal protein uL18 family. Component of the large ribosomal subunit (LSU).

It is found in the cytoplasm. It localises to the nucleus. Functionally, component of the ribosome, a large ribonucleoprotein complex responsible for the synthesis of proteins in the cell. The small ribosomal subunit (SSU) binds messenger RNAs (mRNAs) and translates the encoded message by selecting cognate aminoacyl-transfer RNA (tRNA) molecules. The large subunit (LSU) contains the ribosomal catalytic site termed the peptidyl transferase center (PTC), which catalyzes the formation of peptide bonds, thereby polymerizing the amino acids delivered by tRNAs into a polypeptide chain. The nascent polypeptides leave the ribosome through a tunnel in the LSU and interact with protein factors that function in enzymatic processing, targeting, and the membrane insertion of nascent chains at the exit of the ribosomal tunnel. The polypeptide is Large ribosomal subunit protein uL18 (RpL5) (Anopheles gambiae (African malaria mosquito)).